The sequence spans 545 residues: Capsular polysaccharide phosphotransferase SacB (545 aa).

This sequence belongs to the stealth family.

Its function is as follows. Part of a capsular biosynthesis operon and has been suggested to be the polymerase that links individual UDP-N-acetyl-D-mannosamine monomers. In serotype A the capsule is composed of repeated units of (alpha 1-6)-linked N-acetyl-D-mannosamine-1-phosphate. Non-polar disruption of this open reading frame prevented capsule synthesis. This Neisseria meningitidis serogroup A protein is Capsular polysaccharide phosphotransferase SacB (sacB).